A 265-amino-acid chain; its full sequence is HTH-type transcriptional activator CfaD (265 aa).

An HTH araC/xylS-type domain is found at 164–261 (DKVRNVIEKD…GVTPKQFFTY (98 aa)). 2 consecutive DNA-binding regions (H-T-H motif) follow at residues 181–202 (GIIA…ESEN) and 228–251 (ISQI…NKHY).

As to quaternary structure, homodimer.

Functionally, transcriptional activator of the CFA/I adhesin (cfaA and cfaB) genes of enterotoxigenic E.coli at 37 degrees Celsius. Also represses the silencing effect of H-NS (hns). This is HTH-type transcriptional activator CfaD from Escherichia coli.